A 258-amino-acid chain; its full sequence is 6-carboxyhexanoate--CoA ligase (258 aa).

Belongs to the BioW family. Homodimer. Mg(2+) is required as a cofactor.

The enzyme catalyses heptanedioate + ATP + CoA = 6-carboxyhexanoyl-CoA + AMP + diphosphate. The protein operates within metabolic intermediate metabolism; pimeloyl-CoA biosynthesis; pimeloyl-CoA from pimelate: step 1/1. In terms of biological role, catalyzes the transformation of pimelate into pimeloyl-CoA with concomitant hydrolysis of ATP to AMP. The chain is 6-carboxyhexanoate--CoA ligase from Bacillus atrophaeus (strain 1942).